A 282-amino-acid polypeptide reads, in one-letter code: MDRLPRIPLADIIDRFVDWITMTFGGFFDGIANGLAAFVNGIVTGLGFIPSILLTIIFAALAWWISTRGIALFTLIGFLLIDYLGYWDPMLQTLALVLTSVIISIVVGVPIGIWASQKETVRRIVTPILDLMQTMPAFVYLLPAIFFFNIGVVPGVVASVIFAMPPTIRMTVLGIKQVPADLIEATEAFGSTTAQRLFKVQLPLATKTILAGINQSIMLALSMVVIAAMVGAPGLGSEVYSAVTQLKTGVGVEAGIAIVIVAITLDRITQNIKVKKKSRGNA.

The Extracellular segment spans residues 1 to 18 (MDRLPRIPLADIIDRFVD). Residues 19–39 (WITMTFGGFFDGIANGLAAFV) form a helical membrane-spanning segment. The Cytoplasmic portion of the chain corresponds to 40–44 (NGIVT). A helical transmembrane segment spans residues 45–65 (GLGFIPSILLTIIFAALAWWI). Over 66 to 69 (STRG) the chain is Extracellular. A helical transmembrane segment spans residues 70 to 90 (IALFTLIGFLLIDYLGYWDPM). The ABC transmembrane type-1 domain maps to 90–269 (MLQTLALVLT…IVAITLDRIT (180 aa)). Over 91–93 (LQT) the chain is Cytoplasmic. Residues 94 to 114 (LALVLTSVIISIVVGVPIGIW) traverse the membrane as a helical segment. Residues 115–137 (ASQKETVRRIVTPILDLMQTMPA) are Extracellular-facing. Residues 138–158 (FVYLLPAIFFFNIGVVPGVVA) traverse the membrane as a helical segment. The Cytoplasmic segment spans residues 159–215 (SVIFAMPPTIRMTVLGIKQVPADLIEATEAFGSTTAQRLFKVQLPLATKTILAGINQ). The chain crosses the membrane as a helical span at residues 216–236 (SIMLALSMVVIAAMVGAPGLG). Topologically, residues 237-242 (SEVYSA) are extracellular. Residues 243 to 263 (VTQLKTGVGVEAGIAIVIVAI) traverse the membrane as a helical segment. Residues 264–282 (TLDRITQNIKVKKKSRGNA) are Cytoplasmic-facing.

The protein belongs to the binding-protein-dependent transport system permease family. CysTW subfamily. The complex is composed of two ATP-binding proteins (OpuAA), two transmembrane proteins (OpuAB) and a solute-binding protein (OpuAC).

It localises to the cell membrane. In terms of biological role, involved in a multicomponent binding-protein-dependent transport system for glycine betaine; probably responsible for the translocation of the substrate across the membrane. In Bacillus subtilis (strain 168), this protein is Glycine betaine transport system permease protein OpuAB (opuAB).